The following is a 150-amino-acid chain: Arginine repressor (150 aa).

The protein belongs to the ArgR family.

The protein resides in the cytoplasm. The protein operates within amino-acid biosynthesis; L-arginine biosynthesis [regulation]. In terms of biological role, regulates arginine biosynthesis genes. The polypeptide is Arginine repressor (Desulfitobacterium hafniense (strain DSM 10664 / DCB-2)).